Consider the following 292-residue polypeptide: 4-hydroxybenzoate solanesyltransferase (292 aa).

The next 9 membrane-spanning stretches (helical) occupy residues 28-48, 49-69, 97-117, 118-138, 140-160, 172-192, 217-237, 239-259, and 272-292; these read LILM…LPPL, PLLG…CVVN, VGIG…FYLT, PLSF…PGAK, VFPV…LISW, WVLW…YAMA, VGIF…ILML, PLYW…YIQL, and IFGQ…LGWL.

The protein belongs to the UbiA prenyltransferase family. It depends on Mg(2+) as a cofactor.

The protein resides in the cell inner membrane. The catalysed reaction is all-trans-nonaprenyl diphosphate + 4-hydroxybenzoate = 4-hydroxy-3-(all-trans-nonaprenyl)benzoate + diphosphate. Functionally, catalyzes the prenylation of para-hydroxybenzoate (PHB) with an all-trans polyprenyl group. Mediates the second step in the final reaction sequence of plastoquinone-9 (PQ-9) biosynthesis, which is the condensation of the polyisoprenoid side chain with PHB, generating the first membrane-bound Q intermediate 4-hydroxy-3-solanesylbenzoate. The protein is 4-hydroxybenzoate solanesyltransferase of Synechocystis sp. (strain ATCC 27184 / PCC 6803 / Kazusa).